The primary structure comprises 396 residues: Calreticulin (396 aa).

Residues 1 to 15 (MKSLCLLAIVAVVSA) form the signal peptide. A disulfide bridge links Cys101 with Cys133. Tyr105, Lys107, Tyr124, and Asp131 together coordinate an alpha-D-glucoside. Repeat copies occupy residues 186–197 (AQTGSLEEDWDL), 205–216 (DPDAKKPEDWDE), 222–233 (DAEDVKPEDWEK), 239–250 (DPDAKKPEDWDD), 254–264 (GEWEPPMIDNP), 268–278 (GEWKPKQIKNP), and 282–292 (GKWIHPEIENP). Residues 186 to 250 (AQTGSLEEDW…DAKKPEDWDD (65 aa)) form a 4 X approximate repeats region. The tract at residues 193 to 301 (EDWDLLPAKK…PEYTPDDELY (109 aa)) is P-domain. A compositionally biased stretch (basic and acidic residues) spans 202 to 212 (KIKDPDAKKPE). Residues 202-250 (KIKDPDAKKPEDWDEREYIDDAEDVKPEDWEKPEHIPDPDAKKPEDWDD) form a disordered region. Acidic residues predominate over residues 213–224 (DWDEREYIDDAE). The span at 225–246 (DVKPEDWEKPEHIPDPDAKKPE) shows a compositional bias: basic and acidic residues. The tract at residues 254-292 (GEWEPPMIDNPEYKGEWKPKQIKNPAYKGKWIHPEIENP) is 3 X approximate repeats. The C-domain stretch occupies residues 302-396 (LYENWGAIGF…KEEEEGHDEL (95 aa)). Asp312 lines the an alpha-D-glucoside pocket. A compositionally biased stretch (basic and acidic residues) spans 342 to 380 (FDKLKTVEKEKKEKADEEARKVEEEARKKAEEEKEAKKD). A disordered region spans residues 342–396 (FDKLKTVEKEKKEKADEEARKVEEEARKKAEEEKEAKKDDDEEEEKEEEEGHDEL). Over residues 381–396 (DDEEEEKEEEEGHDEL) the composition is skewed to acidic residues. Residues 393–396 (HDEL) carry the Prevents secretion from ER motif.

It belongs to the calreticulin family.

It localises to the endoplasmic reticulum lumen. In terms of biological role, molecular calcium-binding chaperone promoting folding, oligomeric assembly and quality control in the ER via the calreticulin/calnexin cycle. This lectin may interact transiently with almost all of the monoglucosylated glycoproteins that are synthesized in the ER. Probably by controlling the folding of extracellular matrix protein unc-52/Perlecan, may play a role in the formation of fibrous organelles, a hemidesmosome-like structure attaching muscles to the epidermis. Protects dopaminergic neurons against oxidative stress-induced neurodegeneration. This is Calreticulin (crt-1) from Caenorhabditis briggsae.